Consider the following 1179-residue polypeptide: Protein turtle homolog A (1179 aa).

An N-terminal signal peptide occupies residues 1-20 (MIWCLRLTILSLILSQGADG). At 21–734 (RRKPEVVSVV…TQLPGLLPQP (714 aa)) the chain is on the extracellular side. Ig-like domains lie at 24–124 (PEVV…DFAN), 136–216 (PQFQ…GSVT), 226–318 (PPVI…AYLT), 322–410 (PAQV…SPVT), and 418–498 (PAFI…VTIS). 5 disulfides stabilise this stretch: cysteine 41-cysteine 108, cysteine 158-cysteine 206, cysteine 248-cysteine 301, cysteine 344-cysteine 395, and cysteine 440-cysteine 486. An N-linked (GlcNAc...) asparagine glycan is attached at asparagine 188. Fibronectin type-III domains follow at residues 507–611 (SPHV…TTPA) and 623–718 (PLSP…TSGL). N-linked (GlcNAc...) asparagine glycosylation is found at asparagine 513 and asparagine 524. A helical transmembrane segment spans residues 735–755 (VLAGVVGGVCFLGVAVLVSIL). At 756–1179 (AACLMNRRRA…ISYPEQATLL (424 aa)) the chain is on the cytoplasmic side. A disordered region spans residues 766-807 (ARRHRKRLRQDPPLIFSPRGRSGPHSAPGSDSPDSVTKFKLQ). Serine 809 bears the Phosphoserine mark. Disordered stretches follow at residues 819 to 846 (LWGEPARPPSPHPDSPLGRGPLPLEPIC), 869 to 895 (ERSEPRTSAKRLAQSLDCSSSSPSGVP), 942 to 979 (PPLEEPTPASPPDFMGSHPCPTSSFLPPPDSPPTNLRA), and 1016 to 1079 (APRG…KRRN). The span at 884 to 893 (LDCSSSSPSG) shows a compositional bias: polar residues. Residues 1020–1029 (SLTSQSSGRG) are compositionally biased toward polar residues. Positions 1177-1179 (TLL) match the PDZ-binding motif.

This sequence belongs to the immunoglobulin superfamily. Turtle family. As to quaternary structure, interacts with SHANK1 and probably with MAGI2. In terms of tissue distribution, expressed in hippocampal neurons (at protein level).

Its subcellular location is the cell membrane. The protein localises to the synapse. In terms of biological role, functions in dendrite outgrowth and synapse maturation. The polypeptide is Protein turtle homolog A (Igsf9) (Rattus norvegicus (Rat)).